We begin with the raw amino-acid sequence, 204 residues long: Pantothenate transporter PanT (204 aa).

6 helical membrane-spanning segments follow: residues 18–38, 39–59, 63–83, 86–106, 123–143, and 176–196; these read IILL…AVIV, GAQP…LGAR, FIGG…PGSI, LMFQ…LIIG, LGLG…VVLL, and IFEI…LVPI.

As to quaternary structure, in E.coli forms a stable energy-coupling factor (ECF) transporter complex probably composed of a membrane-embedded substrate-binding protein (S component), two ATP-binding proteins (A components) and a transmembrane protein (T component).

The protein localises to the cell membrane. In terms of biological role, probable pantothenate-binding protein that interacts with the energy-coupling factor (ECF) ABC-transporter complex. Unlike classic ABC transporters this ECF transporter provides the energy necessary to transport a number of different substrates. The substrates themselves are bound by transmembrane, not extracytoplasmic soluble proteins and transport it into cells. Upon coexpression with its energy-coupling factor (ECF) ABC-transporter complex EcfA1A2T in E.coli allows pantothenate uptake; uptake requires both PanT and EcfA1A2T. This is Pantothenate transporter PanT (panT) from Leuconostoc mesenteroides subsp. mesenteroides (strain ATCC 8293 / DSM 20343 / BCRC 11652 / CCM 1803 / JCM 6124 / NCDO 523 / NBRC 100496 / NCIMB 8023 / NCTC 12954 / NRRL B-1118 / 37Y).